The primary structure comprises 1891 residues: MIFQSFLLGNLVSLCMKIINSVVVVGLYYGFLTTFSIGPSYLFLLRALVMEEGTEKKVSATTGFITGQLMMFISIYYAPLHLALGRPHTITVLALPYLLFHFFWNNHKHFFDYGSTTRNSMRNLSIQCVFLNNLIFQLFNHFILPSSMLARLVNIYLFRCNNKILFVTSGFVGWLIGHILFMKWLGLVLVWIRQNHSIRSNKYIRSNKYLVLELRNSMARIFSILLFITCVYYLGRIPSPILTKKLKEASKTEERVESEEERDVEIETASEMKGTKQEQEGSTEEDPYPSPSLFSEEGWDPDKIDETEEIRVNGKDKIKDKFHSHLTETGYNNINTSNSPIYDYQDSYLNNNNTGNLENCKLQLLDKKNENQEQDLFWFQKPLVSLLFDYNRWNRPFRYIKNNRFEQAVRTEMSQYFFDTCKSDGKQKISFTYPPSLSTFWKMIKRKIPLLSLQKTLPNELDTQWVSTNKEKSNNLNKEFLNRLEILDKESLSLDILETRTRFCNDDTKKEYVPKMYDPLLNGLYRGTIKKGVSSSIINNTLLENWEKRVRLNRIHTIFLPNIDYQEFEQKAYTIDKKPLSTEIDEFLTLINELGNEAKSSLNLKGLSLFSDQEQRRANSEKRTKFVKFVFNALDPNETKSGKKSIGIKEISKKVPRWSHKLITELDQQMGEFKDRASMDHQLRSRKAKRVVIFTDNKATKDAEEEVALISYSQQSDFRRGIITGSMRAQRRKTFISKLFQANVHSPLFVDRITPLRLFSFDISELIKPILKNWTDKEGEFKILESREEQTKREEKKEKDKKEDNKRKEQARIAIEEAWDTIPLAQIIRGYMLITQSILRKYILLPALIIAKNIGRMLFLQLPEWSEDLQEWNREMQIKCTYNGVQLSETEFPKNWLRDGIQIKILFPFCLKPWHISKLYPSRRELMKKQKQKDDFCFLTVWGMEAELPFGSPRKRPSFFEPIFKELEKKIGKFKKKYFLTLKILKGKTKLFRKVSKETTKLFIKSIGFLKKIKKELSKVNLIVLFRFKEISESNETKKEKDYLISNQIINESFRQIESGNWPNSSLIETKMKDLTNRTSTIKNKIERITKEKKKVTPEIDINPNKTNNIKKFESPKKIFQILKSRNTRVIWKFHYFLKLFIQRLYINLFLSIINIPRITTQLFLKSTNKLIEKFISNNEINQEKINNQKKIHFMFISTIKKSLYNISKKNSHILCDLSYLSQAYVFYKLSQTQVINFSKFRSVLQYNTTSCFLKTKIKDYFKTLGIFHSELKHKKLQSYRINQWKNWLRWHYQYDLSQIRWSRLMPKKWRTRVNQSCMAQNKNRNLNKWNSYEKDQLLHYKKENDSELYSLSNEKDNFKKCYGYGLLAYKSINYENKSDSFFSRLPFEVQVKKNLEISYNSNTSKHNFVDMPGNLHINNYLRKGNILDRERNLDRKYFDWKIIHFSLRQKGDIEAWVKIDTNSNPNTKIGINNYQIIDKIEKKGVFYLTTHQNPEKTQKNSKKFFFDWMGMNEKIFNRPILNLEFWFFPEFVLLYNVYKIKPWIIPSKFLLFNLNTNKNVSQNKNQNFFLPSNKKIKIKNRSQEAKEPPSQRERGSDIENKGNLSPVFSKHQTDLEKDYVESDTKKGKNKKQYKSNTEAELDLFLKRYLLFQLRWNGALNQRMFENIKVYCLLLRLINPTKITISSIQRREMSLDIMLIQANLPLTDLMKKGVLIIEPIRLSVKDNGQFIMYQTIGISLIHKSKHQTNQRYREQRYVDKKNFDEFILQPQTQRINTEKTHFGLLVPENILWSRRRRELRIRSFFNSWNWNVVDRNSVFCNETNVKNWSQFLGERKPLYKDKNELIKFKFFFWPNYRLEDLACMNRYWFDTNNGSRFSILRIHMYPRLKIN.

6 helical membrane-spanning segments follow: residues 18–38 (IINS…FSIG), 64–84 (FITG…HLAL), 87–107 (PHTI…WNNH), 124–144 (LSIQ…HFIL), 172–192 (VGWL…LVWI), and 221–241 (IFSI…PSPI). Disordered stretches follow at residues 248-300 (EASK…EGWD), 788-807 (EEQT…DNKR), and 1580-1607 (KNRS…NLSP). Over residues 256-268 (VESEEERDVEIET) the composition is skewed to acidic residues. Residues 1582–1601 (RSQEAKEPPSQRERGSDIEN) show a composition bias toward basic and acidic residues.

The protein belongs to the TIC214 family. As to quaternary structure, part of the Tic complex.

The protein resides in the plastid. The protein localises to the chloroplast inner membrane. Functionally, involved in protein precursor import into chloroplasts. May be part of an intermediate translocation complex acting as a protein-conducting channel at the inner envelope. This is Protein TIC 214 from Solanum lycopersicum (Tomato).